Reading from the N-terminus, the 445-residue chain is GTPase Der (445 aa).

EngA-type G domains follow at residues 3-167 and 180-353; these read PVIA…YAGE and IKIA…AAAM. GTP-binding positions include 9–16, 56–60, 119–122, 186–193, 233–237, and 298–301; these read GRPNVGKS, DTGGF, NKAE, DTAGL, and NKWD. The KH-like domain maps to 354–438; that stretch reads KKLPTPKLTR…PLRIEFRSST (85 aa).

This sequence belongs to the TRAFAC class TrmE-Era-EngA-EngB-Septin-like GTPase superfamily. EngA (Der) GTPase family. In terms of assembly, associates with the 50S ribosomal subunit.

Functionally, GTPase that plays an essential role in the late steps of ribosome biogenesis. The protein is GTPase Der of Burkholderia pseudomallei (strain 1106a).